Reading from the N-terminus, the 733-residue chain is Ribosomal protein S6 kinase alpha-2 (733 aa).

The Protein kinase 1 domain occupies Phe-59–Phe-318. ATP-binding positions include Leu-65–Val-73 and Lys-91. Asp-184 acts as the Proton acceptor in catalysis. Ser-218 is subject to Phosphoserine; by PDPK1. The region spanning Val-319–Ser-388 is the AGC-kinase C-terminal domain. Ser-377 is modified (phosphoserine). Residues Tyr-415–Val-672 enclose the Protein kinase 2 domain. ATP is bound by residues Ile-421–Cys-429 and Lys-444. Residue Asp-532 is the Proton acceptor of the active site.

This sequence belongs to the protein kinase superfamily. AGC Ser/Thr protein kinase family. S6 kinase subfamily. Forms a complex with either MAPK1/ERK2 or MAPK3/ERK1 in quiescent cells. Transiently dissociates following mitogenic stimulation. Interacts with FBXO5; cooperate to induce the metaphase arrest of early blastomeres; increases and stabilizes interaction of FBXO5 with CDC20. The cofactor is Mg(2+). Post-translationally, activated by phosphorylation at Ser-218 by PDPK1. Autophosphorylated on Ser-377, as part of the activation process. May be phosphorylated at Thr-356 and Ser-360 by MAPK1/ERK2 and MAPK3/ERK1. N-terminal myristoylation results in an activated kinase in the absence of added growth factors. As to expression, widely expressed with higher expression in lung, skeletal muscle, brain, uterus, ovary, thyroid and prostate.

The protein resides in the nucleus. Its subcellular location is the cytoplasm. The catalysed reaction is L-seryl-[protein] + ATP = O-phospho-L-seryl-[protein] + ADP + H(+). The enzyme catalyses L-threonyl-[protein] + ATP = O-phospho-L-threonyl-[protein] + ADP + H(+). Upon extracellular signal or mitogen stimulation, phosphorylated at Thr-570 in the C-terminal kinase domain (CTKD) by MAPK1/ERK2 and MAPK3/ERK1. The activated CTKD then autophosphorylates Ser-377, allowing binding of PDPK1, which in turn phosphorylates Ser-218 in the N-terminal kinase domain (NTDK) leading to the full activation of the protein and subsequent phosphorylation of the substrates by the NTKD. In terms of biological role, serine/threonine-protein kinase that acts downstream of ERK (MAPK1/ERK2 and MAPK3/ERK1) signaling and mediates mitogenic and stress-induced activation of transcription factors, regulates translation, and mediates cellular proliferation, survival, and differentiation. May function as tumor suppressor in epithelial ovarian cancer cells. The chain is Ribosomal protein S6 kinase alpha-2 (RPS6KA2) from Homo sapiens (Human).